A 145-amino-acid polypeptide reads, in one-letter code: D-aminoacyl-tRNA deacylase (145 aa).

Positions 137-138 (GP) match the Gly-cisPro motif, important for rejection of L-amino acids motif.

The protein belongs to the DTD family. In terms of assembly, homodimer.

It localises to the cytoplasm. The catalysed reaction is glycyl-tRNA(Ala) + H2O = tRNA(Ala) + glycine + H(+). It catalyses the reaction a D-aminoacyl-tRNA + H2O = a tRNA + a D-alpha-amino acid + H(+). Its function is as follows. An aminoacyl-tRNA editing enzyme that deacylates mischarged D-aminoacyl-tRNAs. Also deacylates mischarged glycyl-tRNA(Ala), protecting cells against glycine mischarging by AlaRS. Acts via tRNA-based rather than protein-based catalysis; rejects L-amino acids rather than detecting D-amino acids in the active site. By recycling D-aminoacyl-tRNA to D-amino acids and free tRNA molecules, this enzyme counteracts the toxicity associated with the formation of D-aminoacyl-tRNA entities in vivo and helps enforce protein L-homochirality. This is D-aminoacyl-tRNA deacylase from Limosilactobacillus fermentum (strain NBRC 3956 / LMG 18251) (Lactobacillus fermentum).